Reading from the N-terminus, the 249-residue chain is Phosphate import ATP-binding protein PstB 2 (249 aa).

One can recognise an ABC transporter domain in the interval 4–244; it reads FEVTHLNLFY…PKDHRTQGYV (241 aa). 36-43 serves as a coordination point for ATP; it reads GPSGCGKS.

It belongs to the ABC transporter superfamily. Phosphate importer (TC 3.A.1.7) family. In terms of assembly, the complex is composed of two ATP-binding proteins (PstB), two transmembrane proteins (PstC and PstA) and a solute-binding protein (PstS).

Its subcellular location is the cell inner membrane. The enzyme catalyses phosphate(out) + ATP + H2O = ADP + 2 phosphate(in) + H(+). In terms of biological role, part of the ABC transporter complex PstSACB involved in phosphate import. Responsible for energy coupling to the transport system. In Shewanella oneidensis (strain ATCC 700550 / JCM 31522 / CIP 106686 / LMG 19005 / NCIMB 14063 / MR-1), this protein is Phosphate import ATP-binding protein PstB 2.